Here is a 299-residue protein sequence, read N- to C-terminus: ATP phosphoribosyltransferase (299 aa).

This sequence belongs to the ATP phosphoribosyltransferase family. Long subfamily. As to quaternary structure, equilibrium between an active dimeric form, an inactive hexameric form and higher aggregates. Interconversion between the various forms is largely reversible and is influenced by the natural substrates and inhibitors of the enzyme. Mg(2+) serves as cofactor.

The protein resides in the cytoplasm. The enzyme catalyses 1-(5-phospho-beta-D-ribosyl)-ATP + diphosphate = 5-phospho-alpha-D-ribose 1-diphosphate + ATP. It participates in amino-acid biosynthesis; L-histidine biosynthesis; L-histidine from 5-phospho-alpha-D-ribose 1-diphosphate: step 1/9. Its activity is regulated as follows. Feedback inhibited by histidine. Functionally, catalyzes the condensation of ATP and 5-phosphoribose 1-diphosphate to form N'-(5'-phosphoribosyl)-ATP (PR-ATP). Has a crucial role in the pathway because the rate of histidine biosynthesis seems to be controlled primarily by regulation of HisG enzymatic activity. In Salmonella agona (strain SL483), this protein is ATP phosphoribosyltransferase.